Reading from the N-terminus, the 138-residue chain is Hydrogenase maturation factor HypA (138 aa).

A Ni(2+)-binding site is contributed by histidine 2. 4 residues coordinate Zn(2+): cysteine 73, cysteine 76, cysteine 110, and cysteine 113.

The protein belongs to the HypA/HybF family.

Involved in the maturation of [NiFe] hydrogenases. Required for nickel insertion into the metal center of the hydrogenase. This Thermococcus sibiricus (strain DSM 12597 / MM 739) protein is Hydrogenase maturation factor HypA.